The following is a 1463-amino-acid chain: Secretory phospholipase A2 receptor (1463 aa).

A signal peptide spans 1 to 20 (MPLLSLSLLLLLLQVPAGSA). Over 21–1392 (ETAAWAVTPE…IHTVKKHPGK (1372 aa)) the chain is Extracellular. The 78-residue stretch at 38 to 115 (KGIFIIQSEN…CDSTHVSLKW (78 aa)) folds into the Ricin B-type lectin domain. The N-linked (GlcNAc...) asparagine glycan is linked to Asn93. A Fibronectin type-II domain is found at 173 to 221 (AHGTPCMFPFQYNQQWHHECTREGREDNLLWCATTSRYERDEKWGFCPD). Cystine bridges form between Cys178/Cys204, Cys192/Cys219, Cys260/Cys354, Cys330/Cys346, Cys406/Cys501, Cys478/Cys493, Cys617/Cys634, Cys699/Cys796, Cys774/Cys788, Cys840/Cys938, Cys915/Cys930, Cys992/Cys1096, Cys1068/Cys1088, Cys1209/Cys1223, Cys1280/Cys1377, and Cys1354/Cys1369. 8 consecutive C-type lectin domains span residues 229–353 (CDAV…LPYV), 357–500 (YLNP…LFYL), 504–641 (TGLV…KAMS), 646–795 (PVEN…REWI), 799–937 (PRDV…MPSI), 941–1095 (KKVW…YGFV), 1099–1230 (MQDA…LQGA), and 1235–1376 (PTET…KGFI). A glycan (N-linked (GlcNAc...) asparagine) is linked at Asn454. An N-linked (GlcNAc...) asparagine glycan is attached at Asn1057. Residues 1393–1421 (GPSHSVIPLTVALTLLVILAISTLSFCMY) form a helical membrane-spanning segment. The Cytoplasmic segment spans residues 1422–1463 (KHSHIIFGRLAQFRNPYYPSANFSTVHLEENILISDLEKNDQ). An Endocytosis signal motif is present at residues 1436–1442 (NPYYPSA).

As to quaternary structure, interacts with sPLA2-IB/PLA2G1B; this interaction mediates intracellular signaling as well as clearance of extracellular sPLA2-IB/PLA2G1B via endocytotic pathway. Interacts with sPLA2-X/PLA2G10; this interaction mediates sPLA2-X/PLA2G10 clearance and inactivation. The secretory phospholipase A2 receptor form may be produced by the action of metalloproteinases. It contains all extracellular domains and only lacks transmembrane and cytosolic regions. It is however unclear whether this form is produced by proteolytic cleavage as suggested by some experiments, or by alternative splicing.

The protein localises to the cell membrane. It is found in the secreted. In terms of biological role, receptor for secretory phospholipase A2 (sPLA2). Also able to bind to snake PA2-like toxins. Although its precise function remains unclear, binding of sPLA2 to its receptor participates in both positive and negative regulation of sPLA2 functions as well as clearance of sPLA2. Binding of sPLA2-IB/PLA2G1B induces various effects depending on the cell type, such as activation of the mitogen-activated protein kinase (MAPK) cascade to induce cell proliferation, the production of lipid mediators, selective release of arachidonic acid in bone marrow-derived mast cells. In neutrophils, binding of sPLA2-IB/PLA2G1B can activate p38 MAPK to stimulate elastase release and cell adhesion. May be involved in responses in pro-inflammatory cytokine productions during endotoxic shock. Also has endocytic properties and rapidly internalizes sPLA2 ligands, which is particularly important for the clearance of extracellular sPLA2s to protect their potent enzymatic activities. The soluble secretory phospholipase A2 receptor form is circulating and acts as a negative regulator of sPLA2 functions by blocking the biological functions of sPLA2-IB/PLA2G1B and sPLA2-X/PLA2G10. The polypeptide is Secretory phospholipase A2 receptor (PLA2R1) (Bos taurus (Bovine)).